The following is a 342-amino-acid chain: Dihydroorotase (342 aa).

The Zn(2+) site is built by histidine 13 and histidine 15. Residues 15 to 17 and asparagine 41 contribute to the substrate site; that span reads HLR. Zn(2+) is bound by residues lysine 98, histidine 135, and histidine 173. Residue lysine 98 is modified to N6-carboxylysine. Histidine 135 contributes to the substrate binding site. Residue leucine 218 participates in substrate binding. A Zn(2+)-binding site is contributed by aspartate 246. Aspartate 246 is a catalytic residue. The substrate site is built by histidine 250 and alanine 262.

It belongs to the metallo-dependent hydrolases superfamily. DHOase family. Class II DHOase subfamily. Homodimer. Zn(2+) is required as a cofactor.

It carries out the reaction (S)-dihydroorotate + H2O = N-carbamoyl-L-aspartate + H(+). Its pathway is pyrimidine metabolism; UMP biosynthesis via de novo pathway; (S)-dihydroorotate from bicarbonate: step 3/3. In terms of biological role, catalyzes the reversible cyclization of carbamoyl aspartate to dihydroorotate. The chain is Dihydroorotase from Vibrio atlanticus (strain LGP32) (Vibrio splendidus (strain Mel32)).